A 190-amino-acid chain; its full sequence is Large ribosomal subunit protein bL9 (190 aa).

This sequence belongs to the bacterial ribosomal protein bL9 family.

In terms of biological role, binds to the 23S rRNA. The protein is Large ribosomal subunit protein bL9 of Methylorubrum populi (strain ATCC BAA-705 / NCIMB 13946 / BJ001) (Methylobacterium populi).